Here is a 228-residue protein sequence, read N- to C-terminus: Translation initiation factor 6 (228 aa).

The protein belongs to the eIF-6 family.

Binds to the 50S ribosomal subunit and prevents its association with the 30S ribosomal subunit to form the 70S initiation complex. In Thermococcus onnurineus (strain NA1), this protein is Translation initiation factor 6.